Here is a 298-residue protein sequence, read N- to C-terminus: Cyclin-dependent kinase 2 homolog (298 aa).

The region spanning 4–284 (YHKMEKIGEG…AKEALKHDYF (281 aa)) is the Protein kinase domain. ATP contacts are provided by residues 10-18 (IGEGTYGVV) and Lys-32. Position 14 is a phosphothreonine (Thr-14). Tyr-15 bears the Phosphotyrosine mark. The Proton acceptor role is filled by Asp-125. Residue Thr-158 is modified to Phosphothreonine.

Belongs to the protein kinase superfamily. CMGC Ser/Thr protein kinase family. CDC2/CDKX subfamily. In terms of assembly, may form a complex composed of at least the catalytic subunit CRK2 and a cyclin. It depends on Mg(2+) as a cofactor.

The protein localises to the cytoplasm. The enzyme catalyses L-seryl-[protein] + ATP = O-phospho-L-seryl-[protein] + ADP + H(+). It catalyses the reaction L-threonyl-[protein] + ATP = O-phospho-L-threonyl-[protein] + ADP + H(+). It carries out the reaction [DNA-directed RNA polymerase] + ATP = phospho-[DNA-directed RNA polymerase] + ADP + H(+). Phosphorylation at Thr-14 or Tyr-15 inactivates the enzyme, while phosphorylation at Thr-158 activates it. Functionally, serine/threonine-protein kinase. Involved in the control of the cell cycle. Required for entry into S-phase and mitosis. Probable component of the kinase complex that phosphorylates the repetitive C-terminus of RNA polymerase II. The polypeptide is Cyclin-dependent kinase 2 homolog (Theileria annulata).